The primary structure comprises 224 residues: Urease accessory protein UreF (224 aa).

Belongs to the UreF family. As to quaternary structure, ureD, UreF and UreG form a complex that acts as a GTP-hydrolysis-dependent molecular chaperone, activating the urease apoprotein by helping to assemble the nickel containing metallocenter of UreC. The UreE protein probably delivers the nickel.

It is found in the cytoplasm. Required for maturation of urease via the functional incorporation of the urease nickel metallocenter. This Pseudomonas putida (strain ATCC 700007 / DSM 6899 / JCM 31910 / BCRC 17059 / LMG 24140 / F1) protein is Urease accessory protein UreF.